We begin with the raw amino-acid sequence, 246 residues long: MAAAAIPALLLCLPLLFLLFGWSRARRDDPHSLCYDITVIPKFRPGPRWCAVQGQVDEKTFLHYDCGNKTVTPVSPLGKKLNVTMAWKAQNPVLREVVDILTEQLLDIQLENYTPKEPLTLQARMSCEQKAEGHSSGSWQFSIDGQTFLLFDSEKRMWTTVHPGARKMKEKWENDKDVAMSFHYISMGDCIGWLEDFLMGMDSTLEPSAGAPLAMSSGTTQLRATATTLILCCLLIILPCFILPGI.

Positions 1–25 (MAAAAIPALLLCLPLLFLLFGWSRA) are cleaved as a signal peptide. Positions 29 to 117 (DPHSLCYDIT…IQLENYTPKE (89 aa)) are MHC class I alpha-1 like. Residues C50 and C66 are joined by a disulfide bond. N-linked (GlcNAc...) asparagine glycans are attached at residues N68 and N82. Residues 118 to 210 (PLTLQARMSC…MDSTLEPSAG (93 aa)) form an MHC class I alpha-2 like region. A disulfide bond links C127 and C190. G218 is lipidated: GPI-anchor amidated glycine. The propeptide at 219–246 (TTQLRATATTLILCCLLIILPCFILPGI) is removed in mature form.

This sequence belongs to the MHC class I family. Interacts with KLRK1/NKG2D. In terms of assembly, (Microbial infection) In CMV-infected cells, interacts with the viral glycoprotein UL16; this interaction causes relocalization from the cell surface to the cytoplasm and prevents binding to and activation of KLRK1/NKG2D, providing CMV with an immune evasion mechanism. In terms of tissue distribution, widely expressed. Expressed in trachea. Constitutively expressed in peripheral blood mononuclear cells, including B-cells and natural killer cells, as well as CD4+ and CD8+ T-cells and monocytes. Tends to be up-regulated in various lymphoid malignancies, including chronic lymphocytic leukemia.

The protein localises to the cell membrane. Its subcellular location is the endoplasmic reticulum. Functionally, binds and activates the KLRK1/NKG2D receptor, mediating natural killer cell cytotoxicity. The protein is UL16-binding protein 6 (RAET1L) of Homo sapiens (Human).